The following is a 180-amino-acid chain: Large ribosomal subunit protein uL6 (180 aa).

It belongs to the universal ribosomal protein uL6 family. As to quaternary structure, part of the 50S ribosomal subunit.

In terms of biological role, this protein binds to the 23S rRNA, and is important in its secondary structure. It is located near the subunit interface in the base of the L7/L12 stalk, and near the tRNA binding site of the peptidyltransferase center. This is Large ribosomal subunit protein uL6 from Anaeromyxobacter sp. (strain Fw109-5).